A 399-amino-acid chain; its full sequence is Cytochrome P450 FAS1 (399 aa).

Cys-349 is a heme binding site.

It belongs to the cytochrome P450 family. Heme is required as a cofactor.

Its subcellular location is the cytoplasm. Functionally, may be involved in the biosynthesis of cytokinin phytohormones and in host plant fasciation (leafy gall). This Rhodococcoides fascians (Rhodococcus fascians) protein is Cytochrome P450 FAS1 (fas1).